We begin with the raw amino-acid sequence, 176 residues long: MSLLNVPAGKDLPEDIYVVIEIPANADPIKYEIDKESGALFVDRFMSTAMFYPCNYGYINHTLSLDGDPVDVLVPTPYPLQPGSVIRCRPVGVLKMTDEAGEDAKLVAVPHSKLSKEYDHIKDVNDLPELLKAQIAHFFEHYKDLEKGKWVKVEGWENAEAAKAEIVASFERAKNK.

Residues Lys-30, Arg-44, and Tyr-56 each coordinate substrate. Positions 66, 71, and 103 each coordinate Mg(2+). Tyr-142 contributes to the substrate binding site.

It belongs to the PPase family. Homohexamer. It depends on Mg(2+) as a cofactor.

Its subcellular location is the cytoplasm. It carries out the reaction diphosphate + H2O = 2 phosphate + H(+). Catalyzes the hydrolysis of inorganic pyrophosphate (PPi) forming two phosphate ions. In Escherichia coli O157:H7, this protein is Inorganic pyrophosphatase.